A 139-amino-acid chain; its full sequence is uncharacterized protein (139 aa).

The helical transmembrane segment at 22–38 (SVMSVCFMTMSATVLPI) threads the bilayer.

It is found in the membrane. This is an uncharacterized protein from Saccharomyces cerevisiae (strain ATCC 204508 / S288c) (Baker's yeast).